The sequence spans 498 residues: MARIIETSTGLDALTFDDVLLQPGHSEVMPGQTNIATRIAQDIELNVPILSAAMDTVTESRLAIAMAQAGGMGVIHRNLTPVQQAEEVRQVKKFESGMVVNPVTIGPDATLAEALSLDEGPRHFRASPVVEKSHRLVGILTNRDVRFASDPEQKIYELMTRENLVTVKDGVQQHEAKRLLHTHRIEKXLVVDADSRFVGLITVKDIEKSQLNPHASKDAQGRLRAAAAISVGDDGYERAERLIDAGVDLLVVDTAHGHSQRVLDAVTRVKKLSNSVRIMAGNVATYDGTRALIDAGADAVKVGIGPGSICTTRIVAGVGVPQLAAIMSAVQAAQDQNIPIIADGGIKFSGDLAKAIAAGASAAMIGSLLAGTDESPGEVYLYQGRSFKAYRGMGSVGAMARGSADRYFQAEVRDTLKLVPEGIEGXVPYKGPVSGVLHQLAGGLKAAMGYVGGADLKDFQERATFVRISGAGLRESHAHDVTITPRKARIIPAQAADR.

2 CBS domains span residues 98 to 155 (MVVN…EQKI) and 159 to 216 (MTRE…PHAS). Residues D253 and 303–305 (GIG) contribute to the NAD(+) site. Positions 305 and 307 each coordinate K(+). Position 308 (S308) interacts with IMP. C310 is a binding site for K(+). The active-site Thioimidate intermediate is C310. IMP-binding positions include 343-345 (DGG), 366-367 (GS), and 390-394 (YRGMG). R406 (proton acceptor) is an active-site residue. E421 lines the IMP pocket. Residues E475, S476, and H477 each contribute to the K(+) site.

It belongs to the IMPDH/GMPR family. Homotetramer. K(+) is required as a cofactor.

It carries out the reaction IMP + NAD(+) + H2O = XMP + NADH + H(+). The protein operates within purine metabolism; XMP biosynthesis via de novo pathway; XMP from IMP: step 1/1. Its activity is regulated as follows. Mycophenolic acid (MPA) is a non-competitive inhibitor that prevents formation of the closed enzyme conformation by binding to the same site as the amobile flap. In contrast, mizoribine monophosphate (MZP) is a competitive inhibitor that induces the closed conformation. MPA is a potent inhibitor of mammalian IMPDHs but a poor inhibitor of the bacterial enzymes. MZP is a more potent inhibitor of bacterial IMPDH. Catalyzes the conversion of inosine 5'-phosphate (IMP) to xanthosine 5'-phosphate (XMP), the first committed and rate-limiting step in the de novo synthesis of guanine nucleotides, and therefore plays an important role in the regulation of cell growth. The sequence is that of Inosine-5'-monophosphate dehydrogenase from Rhizobium tropici.